The primary structure comprises 544 residues: Chaperonin GroEL 2 (544 aa).

ATP contacts are provided by residues 30–33, Lys51, 87–91, Gly415, and Asp496; these read TLGP and DGTTT.

Belongs to the chaperonin (HSP60) family. As to quaternary structure, forms a cylinder of 14 subunits composed of two heptameric rings stacked back-to-back. Interacts with the co-chaperonin GroES.

The protein localises to the cytoplasm. It carries out the reaction ATP + H2O + a folded polypeptide = ADP + phosphate + an unfolded polypeptide.. Functionally, together with its co-chaperonin GroES, plays an essential role in assisting protein folding. The GroEL-GroES system forms a nano-cage that allows encapsulation of the non-native substrate proteins and provides a physical environment optimized to promote and accelerate protein folding. The polypeptide is Chaperonin GroEL 2 (Rhizobium johnstonii (strain DSM 114642 / LMG 32736 / 3841) (Rhizobium leguminosarum bv. viciae)).